A 108-amino-acid chain; its full sequence is Large ribosomal subunit protein uL24 (108 aa).

The protein belongs to the universal ribosomal protein uL24 family. In terms of assembly, part of the 50S ribosomal subunit.

In terms of biological role, one of two assembly initiator proteins, it binds directly to the 5'-end of the 23S rRNA, where it nucleates assembly of the 50S subunit. Functionally, one of the proteins that surrounds the polypeptide exit tunnel on the outside of the subunit. In Mycoplasmopsis pulmonis (strain UAB CTIP) (Mycoplasma pulmonis), this protein is Large ribosomal subunit protein uL24.